We begin with the raw amino-acid sequence, 431 residues long: Adenylosuccinate synthetase (431 aa).

Residues 12–18 (GDEGKGK) and 40–42 (GHS) contribute to the GTP site. The active-site Proton acceptor is aspartate 13. Aspartate 13 and glycine 40 together coordinate Mg(2+). IMP is bound by residues 13-16 (DEGK) and 38-41 (NAGH). The Proton donor role is filled by histidine 41. Residues 114–133 (QQQERDRSKNGEKIGTTNKG) are disordered. Residues 115–125 (QQERDRSKNGE) are compositionally biased toward basic and acidic residues. Residues threonine 130, arginine 144, glutamine 225, threonine 240, and arginine 304 each coordinate IMP. 300–306 (TVTKRPR) serves as a coordination point for substrate. GTP is bound by residues arginine 306, 332-334 (CLD), and 414-416 (SIG).

Belongs to the adenylosuccinate synthetase family. Homodimer. Mg(2+) is required as a cofactor.

The protein localises to the cytoplasm. The enzyme catalyses IMP + L-aspartate + GTP = N(6)-(1,2-dicarboxyethyl)-AMP + GDP + phosphate + 2 H(+). It functions in the pathway purine metabolism; AMP biosynthesis via de novo pathway; AMP from IMP: step 1/2. Its function is as follows. Plays an important role in the de novo pathway of purine nucleotide biosynthesis. Catalyzes the first committed step in the biosynthesis of AMP from IMP. The protein is Adenylosuccinate synthetase of Pediococcus pentosaceus (strain ATCC 25745 / CCUG 21536 / LMG 10740 / 183-1w).